Reading from the N-terminus, the 115-residue chain is Small ribosomal subunit protein bS6 (115 aa).

The protein belongs to the bacterial ribosomal protein bS6 family.

In terms of biological role, binds together with bS18 to 16S ribosomal RNA. The sequence is that of Small ribosomal subunit protein bS6 from Picosynechococcus sp. (strain ATCC 27264 / PCC 7002 / PR-6) (Agmenellum quadruplicatum).